Here is a 179-residue protein sequence, read N- to C-terminus: ATP synthase subunit delta (179 aa).

Belongs to the ATPase delta chain family. In terms of assembly, F-type ATPases have 2 components, F(1) - the catalytic core - and F(0) - the membrane proton channel. F(1) has five subunits: alpha(3), beta(3), gamma(1), delta(1), epsilon(1). F(0) has three main subunits: a(1), b(2) and c(10-14). The alpha and beta chains form an alternating ring which encloses part of the gamma chain. F(1) is attached to F(0) by a central stalk formed by the gamma and epsilon chains, while a peripheral stalk is formed by the delta and b chains.

The protein localises to the cell inner membrane. Its function is as follows. F(1)F(0) ATP synthase produces ATP from ADP in the presence of a proton or sodium gradient. F-type ATPases consist of two structural domains, F(1) containing the extramembraneous catalytic core and F(0) containing the membrane proton channel, linked together by a central stalk and a peripheral stalk. During catalysis, ATP synthesis in the catalytic domain of F(1) is coupled via a rotary mechanism of the central stalk subunits to proton translocation. This protein is part of the stalk that links CF(0) to CF(1). It either transmits conformational changes from CF(0) to CF(1) or is implicated in proton conduction. The polypeptide is ATP synthase subunit delta (Burkholderia mallei (strain SAVP1)).